The chain runs to 394 residues: Short-chain dehydrogenase/reductase family 42E member 1 (394 aa).

Y153 (proton acceptor) is an active-site residue. NAD(+) is bound at residue K157. 2 helical membrane passes run 283–303 (LPLTLIYCLAFLVEMTHFIVG) and 367–387 (FMLWDGILILLLALSVLTWIL).

Belongs to the 3-beta-HSD family.

Its subcellular location is the membrane. In Mus musculus (Mouse), this protein is Short-chain dehydrogenase/reductase family 42E member 1 (Sdr42e1).